The primary structure comprises 1188 residues: DNA-directed RNA polymerase subunit beta (1188 aa).

Belongs to the RNA polymerase beta chain family. In terms of assembly, the RNAP catalytic core consists of 2 alpha, 1 beta, 1 beta' and 1 omega subunit. When a sigma factor is associated with the core the holoenzyme is formed, which can initiate transcription.

The catalysed reaction is RNA(n) + a ribonucleoside 5'-triphosphate = RNA(n+1) + diphosphate. In terms of biological role, DNA-dependent RNA polymerase catalyzes the transcription of DNA into RNA using the four ribonucleoside triphosphates as substrates. In Streptococcus pyogenes serotype M1, this protein is DNA-directed RNA polymerase subunit beta.